The sequence spans 381 residues: 1-deoxy-D-xylulose 5-phosphate reductoisomerase (381 aa).

The NADPH site is built by Gly-13, Ser-14, Ile-15, Asn-40, and Asn-114. Lys-115 is a 1-deoxy-D-xylulose 5-phosphate binding site. Glu-116 serves as a coordination point for NADPH. Position 140 (Asp-140) interacts with Mn(2+). Ser-141, Glu-142, Ser-166, and His-189 together coordinate 1-deoxy-D-xylulose 5-phosphate. Glu-142 provides a ligand contact to Mn(2+). Gly-195 lines the NADPH pocket. 1-deoxy-D-xylulose 5-phosphate is bound by residues Ser-202, Asn-207, Lys-208, and Glu-211. Glu-211 provides a ligand contact to Mn(2+).

The protein belongs to the DXR family. It depends on Mg(2+) as a cofactor. Mn(2+) serves as cofactor.

It carries out the reaction 2-C-methyl-D-erythritol 4-phosphate + NADP(+) = 1-deoxy-D-xylulose 5-phosphate + NADPH + H(+). It participates in isoprenoid biosynthesis; isopentenyl diphosphate biosynthesis via DXP pathway; isopentenyl diphosphate from 1-deoxy-D-xylulose 5-phosphate: step 1/6. Catalyzes the NADPH-dependent rearrangement and reduction of 1-deoxy-D-xylulose-5-phosphate (DXP) to 2-C-methyl-D-erythritol 4-phosphate (MEP). This chain is 1-deoxy-D-xylulose 5-phosphate reductoisomerase, found in Treponema denticola (strain ATCC 35405 / DSM 14222 / CIP 103919 / JCM 8153 / KCTC 15104).